Consider the following 395-residue polypeptide: 8-amino-7-oxononanoate synthase (395 aa).

Arg24 provides a ligand contact to substrate. Position 111-112 (111-112) interacts with pyridoxal 5'-phosphate; that stretch reads GF. His136 serves as a coordination point for substrate. Pyridoxal 5'-phosphate-binding positions include Ser184, 209-212, and 240-243; these read DDAH and TLSK. N6-(pyridoxal phosphate)lysine is present on Lys243. Thr357 contacts substrate.

Belongs to the class-II pyridoxal-phosphate-dependent aminotransferase family. BioF subfamily. Homodimer. Pyridoxal 5'-phosphate serves as cofactor.

It carries out the reaction 6-carboxyhexanoyl-[ACP] + L-alanine + H(+) = (8S)-8-amino-7-oxononanoate + holo-[ACP] + CO2. The protein operates within cofactor biosynthesis; biotin biosynthesis. Its function is as follows. Catalyzes the decarboxylative condensation of pimeloyl-[acyl-carrier protein] and L-alanine to produce 8-amino-7-oxononanoate (AON), [acyl-carrier protein], and carbon dioxide. This Alkaliphilus oremlandii (strain OhILAs) (Clostridium oremlandii (strain OhILAs)) protein is 8-amino-7-oxononanoate synthase.